The following is a 371-amino-acid chain: Protein MxiG (371 aa).

The chain crosses the membrane as a helical span at residues 127 to 141 (VFFFFAVIVVLIIIF).

The protein resides in the cell inner membrane. Its subcellular location is the cell outer membrane. In terms of biological role, involved in the secretion of the Ipa antigens. Involved in the intracellular dissemination of Shigella. Part of the Mxi-Spa secretion apparatus. This is Protein MxiG (mxiG) from Shigella flexneri.